A 155-amino-acid chain; its full sequence is Mitochondrial import protein 1 (155 aa).

The protein belongs to the MIM1 family.

The protein resides in the mitochondrion outer membrane. Functionally, required for the assembly of the TOM (translocase of outer membrane) receptor complex, which is responsible for the recognition and translocation of cytosolically synthesized mitochondrial preproteins. This is Mitochondrial import protein 1 from Eremothecium gossypii (strain ATCC 10895 / CBS 109.51 / FGSC 9923 / NRRL Y-1056) (Yeast).